Here is a 133-residue protein sequence, read N- to C-terminus: NADPH-dependent 7-cyano-7-deazaguanine reductase (133 aa).

Cys-49 functions as the Thioimide intermediate in the catalytic mechanism. The Proton donor role is filled by Asp-56. Substrate is bound by residues 71–73 (IEL) and 90–91 (HE).

This sequence belongs to the GTP cyclohydrolase I family. QueF type 1 subfamily.

The protein localises to the cytoplasm. It carries out the reaction 7-aminomethyl-7-carbaguanine + 2 NADP(+) = 7-cyano-7-deazaguanine + 2 NADPH + 3 H(+). It functions in the pathway tRNA modification; tRNA-queuosine biosynthesis. In terms of biological role, catalyzes the NADPH-dependent reduction of 7-cyano-7-deazaguanine (preQ0) to 7-aminomethyl-7-deazaguanine (preQ1). The protein is NADPH-dependent 7-cyano-7-deazaguanine reductase of Leptospira interrogans serogroup Icterohaemorrhagiae serovar copenhageni (strain Fiocruz L1-130).